Consider the following 363-residue polypeptide: tRNA/tmRNA (uracil-C(5))-methyltransferase (363 aa).

S-adenosyl-L-methionine is bound by residues Gln-187, Tyr-215, Asn-220, Glu-236, and Asp-296. Cys-321 serves as the catalytic Nucleophile. Residue Glu-355 is the Proton acceptor of the active site.

Belongs to the class I-like SAM-binding methyltransferase superfamily. RNA M5U methyltransferase family. TrmA subfamily.

It catalyses the reaction uridine(54) in tRNA + S-adenosyl-L-methionine = 5-methyluridine(54) in tRNA + S-adenosyl-L-homocysteine + H(+). The enzyme catalyses uridine(341) in tmRNA + S-adenosyl-L-methionine = 5-methyluridine(341) in tmRNA + S-adenosyl-L-homocysteine + H(+). Dual-specificity methyltransferase that catalyzes the formation of 5-methyluridine at position 54 (m5U54) in all tRNAs, and that of position 341 (m5U341) in tmRNA (transfer-mRNA). The protein is tRNA/tmRNA (uracil-C(5))-methyltransferase of Pseudomonas fluorescens.